Consider the following 194-residue polypeptide: Glycerol-3-phosphate acyltransferase (194 aa).

5 helical membrane passes run 4 to 24, 78 to 98, 110 to 130, 137 to 157, and 161 to 181; these read EIVLIIGAYLLGSIPTGLLLA, EIWVAATGLAAFLGHVYTVFL, LGVFIGISPLSVLAALAIFVF, YVSLASITAAAAIPFLVALIE, and LLITMSVIIAALVVFKHRENI.

Belongs to the PlsY family. As to quaternary structure, probably interacts with PlsX.

It is found in the cell inner membrane. The catalysed reaction is an acyl phosphate + sn-glycerol 3-phosphate = a 1-acyl-sn-glycero-3-phosphate + phosphate. It participates in lipid metabolism; phospholipid metabolism. Catalyzes the transfer of an acyl group from acyl-phosphate (acyl-PO(4)) to glycerol-3-phosphate (G3P) to form lysophosphatidic acid (LPA). This enzyme utilizes acyl-phosphate as fatty acyl donor, but not acyl-CoA or acyl-ACP. The chain is Glycerol-3-phosphate acyltransferase from Geotalea daltonii (strain DSM 22248 / JCM 15807 / FRC-32) (Geobacter daltonii).